The following is a 167-amino-acid chain: Crossover junction endodeoxyribonuclease RuvC (167 aa).

Active-site residues include D7, E67, and D139. The Mg(2+) site is built by D7, E67, and D139.

The protein belongs to the RuvC family. Homodimer which binds Holliday junction (HJ) DNA. The HJ becomes 2-fold symmetrical on binding to RuvC with unstacked arms; it has a different conformation from HJ DNA in complex with RuvA. In the full resolvosome a probable DNA-RuvA(4)-RuvB(12)-RuvC(2) complex forms which resolves the HJ. Requires Mg(2+) as cofactor.

It localises to the cytoplasm. It catalyses the reaction Endonucleolytic cleavage at a junction such as a reciprocal single-stranded crossover between two homologous DNA duplexes (Holliday junction).. Functionally, the RuvA-RuvB-RuvC complex processes Holliday junction (HJ) DNA during genetic recombination and DNA repair. Endonuclease that resolves HJ intermediates. Cleaves cruciform DNA by making single-stranded nicks across the HJ at symmetrical positions within the homologous arms, yielding a 5'-phosphate and a 3'-hydroxyl group; requires a central core of homology in the junction. The consensus cleavage sequence is 5'-(A/T)TT(C/G)-3'. Cleavage occurs on the 3'-side of the TT dinucleotide at the point of strand exchange. HJ branch migration catalyzed by RuvA-RuvB allows RuvC to scan DNA until it finds its consensus sequence, where it cleaves and resolves the cruciform DNA. This Zymomonas mobilis subsp. mobilis (strain ATCC 31821 / ZM4 / CP4) protein is Crossover junction endodeoxyribonuclease RuvC.